The chain runs to 308 residues: L-lactate dehydrogenase 2 (308 aa).

NAD(+) is bound by residues Val-14, Asp-35, Tyr-65, and 79-80 (GA). Arg-88 is a binding site for substrate. Ser-101 serves as a coordination point for NAD(+). 120 to 123 (NPVD) contacts substrate. NAD(+) is bound at residue Thr-143. A substrate-binding site is contributed by 148-151 (DTAR). His-175 functions as the Proton acceptor in the catalytic mechanism. Thr-225 serves as a coordination point for substrate.

The protein belongs to the LDH/MDH superfamily. LDH family. In terms of assembly, homotetramer.

The protein localises to the cytoplasm. It carries out the reaction (S)-lactate + NAD(+) = pyruvate + NADH + H(+). It participates in fermentation; pyruvate fermentation to lactate; (S)-lactate from pyruvate: step 1/1. Functionally, catalyzes the conversion of lactate to pyruvate. This is L-lactate dehydrogenase 2 from Lactobacillus johnsonii (strain CNCM I-12250 / La1 / NCC 533).